We begin with the raw amino-acid sequence, 258 residues long: Isoprenyl transferase (258 aa).

Residue aspartate 38 is part of the active site. Aspartate 38 contributes to the Mg(2+) binding site. Substrate is bound by residues 39–42 (GNGR), tryptophan 43, arginine 51, histidine 55, and 83–85 (STE). Catalysis depends on asparagine 86, which acts as the Proton acceptor. Substrate is bound by residues tryptophan 87, arginine 89, arginine 206, and 212-214 (RIS). Glutamate 225 provides a ligand contact to Mg(2+).

This sequence belongs to the UPP synthase family. As to quaternary structure, homodimer. Mg(2+) is required as a cofactor.

Catalyzes the condensation of isopentenyl diphosphate (IPP) with allylic pyrophosphates generating different type of terpenoids. The polypeptide is Isoprenyl transferase (Bacillus cereus (strain ATCC 14579 / DSM 31 / CCUG 7414 / JCM 2152 / NBRC 15305 / NCIMB 9373 / NCTC 2599 / NRRL B-3711)).